The chain runs to 64 residues: Large ribosomal subunit protein uL29 (64 aa).

Belongs to the universal ribosomal protein uL29 family.

This is Large ribosomal subunit protein uL29 from Lacticaseibacillus paracasei (strain ATCC 334 / BCRC 17002 / CCUG 31169 / CIP 107868 / KCTC 3260 / NRRL B-441) (Lactobacillus paracasei).